Consider the following 135-residue polypeptide: Galectin-1 (135 aa).

An N-acetylalanine modification is found at Ala-2. The 132-residue stretch at 4 to 135 (GLVASNLNLK…DFKIKCVAFE (132 aa)) folds into the Galectin domain. N6-acetyllysine is present on residues Lys-13, Lys-19, and Lys-29. The residue at position 30 (Ser-30) is a Phosphoserine. A beta-D-galactoside-binding positions include 45–49 (HFNPR), His-53, Asn-62, and 69–72 (WGAE). At Lys-128 the chain carries N6-acetyllysine.

In terms of assembly, homodimer. Binds LGALS3BP. Interacts with CD2, CD3, CD4, CD6, CD7, CD43, ALCAM and CD45. Interacts with laminin (via poly-N-acetyllactosamine). Interacts with SUSD2. Interacts with cargo receptor TMED10; the interaction mediates the translocation from the cytoplasm into the ERGIC (endoplasmic reticulum-Golgi intermediate compartment) and thereby secretion.

It localises to the secreted. It is found in the extracellular space. Its subcellular location is the extracellular matrix. The protein resides in the cytoplasm. Lectin that binds beta-galactoside and a wide array of complex carbohydrates. Plays a role in regulating apoptosis, cell proliferation and cell differentiation. Inhibits CD45 protein phosphatase activity and therefore the dephosphorylation of Lyn kinase. Strong inducer of T-cell apoptosis. This Sus scrofa (Pig) protein is Galectin-1 (LGALS1).